Reading from the N-terminus, the 149-residue chain is Large ribosomal subunit protein bL9 (149 aa).

It belongs to the bacterial ribosomal protein bL9 family.

Binds to the 23S rRNA. The chain is Large ribosomal subunit protein bL9 from Helicobacter acinonychis (strain Sheeba).